The following is a 961-amino-acid chain: ATPase 7, plasma membrane-type (961 aa).

Topologically, residues Met1–Phe64 are cytoplasmic. The chain crosses the membrane as a helical span at residues Leu65–Ile84. At Gly85–Tyr96 the chain is on the extracellular side. The chain crosses the membrane as a helical span at residues His97–Glu117. The Cytoplasmic portion of the chain corresponds to Asn118–Ile246. The chain crosses the membrane as a helical span at residues Gly247 to Gly267. The Extracellular segment spans residues Leu268 to Gly276. A helical membrane pass occupies residues Ile277–Thr294. Over Val295 to Lys643 the chain is Cytoplasmic. The active-site 4-aspartylphosphate intermediate is the Asp332. 2 residues coordinate Mg(2+): Asp588 and Asp592. A helical transmembrane segment spans residues Asn644–Val665. Residues Phe666 to Asp670 lie on the Extracellular side of the membrane. Residues Phe671–Asp693 form a helical membrane-spanning segment. At Arg694–Ile709 the chain is on the cytoplasmic side. The chain crosses the membrane as a helical span at residues Phe710 to Ala730. The Extracellular segment spans residues Ala731–Glu764. The helical transmembrane segment at Gln765–Thr785 threads the bilayer. Over Arg786–Gly797 the chain is Cytoplasmic. A helical membrane pass occupies residues Phe798–Ala818. The Extracellular segment spans residues Asn819–Arg826. Residues Ser827–Leu847 form a helical membrane-spanning segment. Residues Asp848–Ile961 lie on the Cytoplasmic side of the membrane. Thr894 is subject to Phosphothreonine. Ser910 and Ser942 each carry phosphoserine. An interaction with 14-3-3 proteins region spans residues Tyr959–Ile961. Position 960 is a phosphothreonine (Thr960).

This sequence belongs to the cation transport ATPase (P-type) (TC 3.A.3) family. Type IIIA subfamily. In terms of assembly, binds to 14-3-3 proteins. The binding is induced by phosphorylation of Thr-960. Binding to 14-3-3 proteins activates the H(+)-ATPase. In terms of tissue distribution, expressed in guard cells, roots and leaves, and barely in mesophyll cells.

Its subcellular location is the membrane. The enzyme catalyses ATP + H2O + H(+)(in) = ADP + phosphate + 2 H(+)(out). In terms of biological role, the plasma membrane H(+) ATPase of plants and fungi generates a proton gradient that drives the active transport of nutrients by H(+)-symport. The resulting external acidification and/or internal alkinization may mediate growth responses. The protein is ATPase 7, plasma membrane-type (AHA7) of Arabidopsis thaliana (Mouse-ear cress).